The chain runs to 129 residues: Small ribosomal subunit protein uS9 (129 aa).

Belongs to the universal ribosomal protein uS9 family.

The polypeptide is Small ribosomal subunit protein uS9 (rpsI) (Helicobacter pylori (strain J99 / ATCC 700824) (Campylobacter pylori J99)).